The primary structure comprises 206 residues: Small ribosomal subunit protein uS4 (206 aa).

Residues 96–156 form the S4 RNA-binding domain; it reads GRLDNVVYRM…EKAKKQSRVK (61 aa).

This sequence belongs to the universal ribosomal protein uS4 family. Part of the 30S ribosomal subunit. Contacts protein S5. The interaction surface between S4 and S5 is involved in control of translational fidelity.

One of the primary rRNA binding proteins, it binds directly to 16S rRNA where it nucleates assembly of the body of the 30S subunit. Functionally, with S5 and S12 plays an important role in translational accuracy. In Klebsiella pneumoniae (strain 342), this protein is Small ribosomal subunit protein uS4.